The following is a 366-amino-acid chain: Leucine-rich repeat-containing protein 58 (366 aa).

At Ser-19 the chain carries Phosphoserine. 9 LRR repeats span residues 40–61 (ALLR…LGGG), 64–86 (HLQL…LTLS), 87–108 (GLRT…PKGL), 116–138 (SLQV…LELR), 139–161 (ALQT…ENLR), 162–184 (SLEC…ANLP), 185–206 (SLNY…LSQL), 208–229 (SLRS…ILNL), and 231–251 (HLEE…RDLT). Residues 337–346 (ASHSSTSQSE) show a composition bias toward low complexity. Residues 337 to 356 (ASHSSTSQSESDSEDEASVA) are disordered.

In Mus musculus (Mouse), this protein is Leucine-rich repeat-containing protein 58 (Lrrc58).